Here is a 222-residue protein sequence, read N- to C-terminus: Cytidylate kinase (222 aa).

10-18 (GTSSSGKSV) contributes to the ATP binding site.

It belongs to the cytidylate kinase family. Type 1 subfamily.

The protein resides in the cytoplasm. It carries out the reaction CMP + ATP = CDP + ADP. The enzyme catalyses dCMP + ATP = dCDP + ADP. The protein is Cytidylate kinase of Mycoplasma capricolum subsp. capricolum (strain California kid / ATCC 27343 / NCTC 10154).